The chain runs to 537 residues: Cytochrome P450 27C1 (537 aa).

Residue C483 participates in heme binding.

It belongs to the cytochrome P450 family. It depends on heme as a cofactor. As to expression, expressed in the dorsal third of retinal pigment epithelium, but not in the ventral counterpart (at protein level).

Its subcellular location is the membrane. It catalyses the reaction all-trans-retinol + 2 reduced [adrenodoxin] + O2 + 2 H(+) = all-trans-3,4-didehydroretinol + 2 oxidized [adrenodoxin] + 2 H2O. Efficiently catalyzes the conversion of all-trans retinol (also called vitamin A1, the precursor of 11-cis retinal) to 3,4-didehydroretinol (also called vitamin A2, the precursor of 11-cis 3,4-didehydroretinal), also acts on all-trans retinal and all-trans retinoic acid. The replacement of 11-cis retinal chromophore in photopigments with 11-cis 3,4-didehydroretinal enhances sensitivity to long-wavelength light. This may improve vision in fresh water which is often turbid. This is Cytochrome P450 27C1 (cyp27c1) from Aquarana catesbeiana (American bullfrog).